Consider the following 37-residue polypeptide: Large ribosomal subunit protein bL36 (37 aa).

Belongs to the bacterial ribosomal protein bL36 family.

The chain is Large ribosomal subunit protein bL36 from Maridesulfovibrio salexigens (strain ATCC 14822 / DSM 2638 / NCIMB 8403 / VKM B-1763) (Desulfovibrio salexigens).